The chain runs to 374 residues: Beta sliding clamp (374 aa).

It belongs to the beta sliding clamp family. In terms of assembly, forms a ring-shaped head-to-tail homodimer around DNA which binds and tethers DNA polymerases and other proteins to the DNA. The DNA replisome complex has a single clamp-loading complex (3 tau and 1 each of delta, delta', psi and chi subunits) which binds 3 Pol III cores (1 core on the leading strand and 2 on the lagging strand) each with a beta sliding clamp dimer. Additional proteins in the replisome are other copies of gamma, psi and chi, Ssb, DNA helicase and RNA primase.

The protein localises to the cytoplasm. Functionally, confers DNA tethering and processivity to DNA polymerases and other proteins. Acts as a clamp, forming a ring around DNA (a reaction catalyzed by the clamp-loading complex) which diffuses in an ATP-independent manner freely and bidirectionally along dsDNA. Initially characterized for its ability to contact the catalytic subunit of DNA polymerase III (Pol III), a complex, multichain enzyme responsible for most of the replicative synthesis in bacteria; Pol III exhibits 3'-5' exonuclease proofreading activity. The beta chain is required for initiation of replication as well as for processivity of DNA replication. This Helicobacter pylori (strain ATCC 700392 / 26695) (Campylobacter pylori) protein is Beta sliding clamp (dnaN).